A 283-amino-acid chain; its full sequence is Protease HtpX (283 aa).

Transmembrane regions (helical) follow at residues 4-24 (ILLF…ILNV) and 33-53 (GGIL…SLFL). A Zn(2+)-binding site is contributed by H139. E140 is an active-site residue. H143 is a Zn(2+) binding site. The next 2 helical transmembrane spans lie at 147–167 (GDMV…IFLS) and 190–210 (IYFL…SIIA). E218 lines the Zn(2+) pocket.

The protein belongs to the peptidase M48B family. The cofactor is Zn(2+).

It is found in the cell inner membrane. This Haemophilus influenzae (strain 86-028NP) protein is Protease HtpX.